The sequence spans 484 residues: Protein nucleotidyltransferase YdiU (484 aa).

ATP-binding residues include Gly-81, Gly-83, Arg-84, Lys-103, Asp-115, Gly-116, Arg-166, and Arg-173. Asp-244 acts as the Proton acceptor in catalysis. Mg(2+)-binding residues include Asn-245 and Asp-254. Asp-254 contacts ATP.

The protein belongs to the SELO family. Requires Mg(2+) as cofactor. Mn(2+) is required as a cofactor.

It catalyses the reaction L-seryl-[protein] + ATP = 3-O-(5'-adenylyl)-L-seryl-[protein] + diphosphate. It carries out the reaction L-threonyl-[protein] + ATP = 3-O-(5'-adenylyl)-L-threonyl-[protein] + diphosphate. The enzyme catalyses L-tyrosyl-[protein] + ATP = O-(5'-adenylyl)-L-tyrosyl-[protein] + diphosphate. The catalysed reaction is L-histidyl-[protein] + UTP = N(tele)-(5'-uridylyl)-L-histidyl-[protein] + diphosphate. It catalyses the reaction L-seryl-[protein] + UTP = O-(5'-uridylyl)-L-seryl-[protein] + diphosphate. It carries out the reaction L-tyrosyl-[protein] + UTP = O-(5'-uridylyl)-L-tyrosyl-[protein] + diphosphate. Its function is as follows. Nucleotidyltransferase involved in the post-translational modification of proteins. It can catalyze the addition of adenosine monophosphate (AMP) or uridine monophosphate (UMP) to a protein, resulting in modifications known as AMPylation and UMPylation. This chain is Protein nucleotidyltransferase YdiU, found in Shewanella baltica (strain OS195).